We begin with the raw amino-acid sequence, 1178 residues long: DNA-directed RNA polymerase subunit beta (1178 aa).

The protein belongs to the RNA polymerase beta chain family. The RNAP catalytic core consists of 2 alpha, 1 beta, 1 beta' and 1 omega subunit. When a sigma factor is associated with the core the holoenzyme is formed, which can initiate transcription.

The catalysed reaction is RNA(n) + a ribonucleoside 5'-triphosphate = RNA(n+1) + diphosphate. DNA-dependent RNA polymerase catalyzes the transcription of DNA into RNA using the four ribonucleoside triphosphates as substrates. This chain is DNA-directed RNA polymerase subunit beta, found in Treponema pallidum (strain Nichols).